A 296-amino-acid chain; its full sequence is tRNA dimethylallyltransferase (296 aa).

8-15 (GPTGSGKT) lines the ATP pocket. 10–15 (TGSGKT) serves as a coordination point for substrate. An interaction with substrate tRNA region spans residues 32-35 (DSRQ).

It belongs to the IPP transferase family. Monomer. The cofactor is Mg(2+).

It catalyses the reaction adenosine(37) in tRNA + dimethylallyl diphosphate = N(6)-dimethylallyladenosine(37) in tRNA + diphosphate. Functionally, catalyzes the transfer of a dimethylallyl group onto the adenine at position 37 in tRNAs that read codons beginning with uridine, leading to the formation of N6-(dimethylallyl)adenosine (i(6)A). This is tRNA dimethylallyltransferase from Leptospira biflexa serovar Patoc (strain Patoc 1 / Ames).